The primary structure comprises 400 residues: Probable tRNA sulfurtransferase (400 aa).

A THUMP domain is found at 60–164 (EPIIEKLKNV…KEATYITSGT (105 aa)). ATP-binding positions include 182–183 (LL), 207–208 (HF), R264, G286, and Q295.

The protein belongs to the ThiI family.

Its subcellular location is the cytoplasm. The catalysed reaction is [ThiI sulfur-carrier protein]-S-sulfanyl-L-cysteine + a uridine in tRNA + 2 reduced [2Fe-2S]-[ferredoxin] + ATP + H(+) = [ThiI sulfur-carrier protein]-L-cysteine + a 4-thiouridine in tRNA + 2 oxidized [2Fe-2S]-[ferredoxin] + AMP + diphosphate. The enzyme catalyses [ThiS sulfur-carrier protein]-C-terminal Gly-Gly-AMP + S-sulfanyl-L-cysteinyl-[cysteine desulfurase] + AH2 = [ThiS sulfur-carrier protein]-C-terminal-Gly-aminoethanethioate + L-cysteinyl-[cysteine desulfurase] + A + AMP + 2 H(+). It participates in cofactor biosynthesis; thiamine diphosphate biosynthesis. Catalyzes the ATP-dependent transfer of a sulfur to tRNA to produce 4-thiouridine in position 8 of tRNAs, which functions as a near-UV photosensor. Also catalyzes the transfer of sulfur to the sulfur carrier protein ThiS, forming ThiS-thiocarboxylate. This is a step in the synthesis of thiazole, in the thiamine biosynthesis pathway. The sulfur is donated as persulfide by IscS. The sequence is that of Probable tRNA sulfurtransferase from Oceanobacillus iheyensis (strain DSM 14371 / CIP 107618 / JCM 11309 / KCTC 3954 / HTE831).